Consider the following 117-residue polypeptide: CUE domain-containing protein CUE4 (117 aa).

The tract at residues 27 to 74 (QVPSRTVQDAKPAPSVATNDPSPEPVPSAPEERVARLNRHGSDRKRAV) is disordered. Residue Lys-37 forms a Glycyl lysine isopeptide (Lys-Gly) (interchain with G-Cter in ubiquitin) linkage. Ser-48 carries the post-translational modification Phosphoserine. Basic and acidic residues predominate over residues 56–74 (PEERVARLNRHGSDRKRAV). In terms of domain architecture, CUE spans 74–116 (VNSDMVEIVMTMAPHVPQEKVVQDLRNTGSIEHTMENIFAGKL).

Ubiquitinated.

It is found in the cytoplasm. Its subcellular location is the endoplasmic reticulum. In Saccharomyces cerevisiae (strain ATCC 204508 / S288c) (Baker's yeast), this protein is CUE domain-containing protein CUE4 (CUE4).